A 75-amino-acid chain; its full sequence is Large ribosomal subunit protein bL31 (75 aa).

It belongs to the bacterial ribosomal protein bL31 family. Type A subfamily. Part of the 50S ribosomal subunit.

Binds the 23S rRNA. In Chlorobium luteolum (strain DSM 273 / BCRC 81028 / 2530) (Pelodictyon luteolum), this protein is Large ribosomal subunit protein bL31.